The following is a 417-amino-acid chain: Serine hydroxymethyltransferase (417 aa).

(6S)-5,6,7,8-tetrahydrofolate contacts are provided by residues L121 and 125-127 (GHL). At K229 the chain carries N6-(pyridoxal phosphate)lysine. Position 355 to 357 (355 to 357 (SPF)) interacts with (6S)-5,6,7,8-tetrahydrofolate.

Belongs to the SHMT family. In terms of assembly, homodimer. The cofactor is pyridoxal 5'-phosphate.

The protein resides in the cytoplasm. The enzyme catalyses (6R)-5,10-methylene-5,6,7,8-tetrahydrofolate + glycine + H2O = (6S)-5,6,7,8-tetrahydrofolate + L-serine. It functions in the pathway one-carbon metabolism; tetrahydrofolate interconversion. The protein operates within amino-acid biosynthesis; glycine biosynthesis; glycine from L-serine: step 1/1. In terms of biological role, catalyzes the reversible interconversion of serine and glycine with tetrahydrofolate (THF) serving as the one-carbon carrier. This reaction serves as the major source of one-carbon groups required for the biosynthesis of purines, thymidylate, methionine, and other important biomolecules. Also exhibits THF-independent aldolase activity toward beta-hydroxyamino acids, producing glycine and aldehydes, via a retro-aldol mechanism. This Shewanella baltica (strain OS223) protein is Serine hydroxymethyltransferase.